The chain runs to 247 residues: Chloride intracellular channel protein 2 (247 aa).

The tract at residues 1–94 (MSGLRPGTQV…KIEEFLEQTL (94 aa)) is N-terminal. The required for insertion into the membrane stretch occupies residues 1–96 (MSGLRPGTQV…EEFLEQTLAP (96 aa)). Glu-25 is a glutathione binding site. Positions 30-33 (CPFC) match the G-site motif. A disulfide bridge connects residues Cys-30 and Cys-33. Residues 32-52 (FCQRLFMILWLKGVKFNVTTV) traverse the membrane as a helical segment. A GST C-terminal domain is found at 76–239 (NKELKTDFIK…PEDKEIENTY (164 aa)). The joint loop stretch occupies residues 95 to 106 (APPRYPHLSPKY). The C-terminal stretch occupies residues 107-247 (KESFDVGCNL…TYANVAKQKS (141 aa)). A foot loop region spans residues 151-171 (NTPLLDEIDPDSAEEPPVSRR). His-227 contacts glutathione.

Belongs to the chloride channel CLIC family. In terms of assembly, monomer. Interacts with TRAPPC2 and RYR2. In terms of tissue distribution, expressed in adult and fetal brain, heart, skeletal muscle, liver, lung, and spleen. Detected in adult stomach and testis. Expressed in fetal thymus and kidney.

The protein resides in the cytoplasm. It localises to the membrane. It carries out the reaction chloride(in) = chloride(out). It catalyses the reaction tert-butyl hydroperoxide + 2 glutathione = tert-butanol + glutathione disulfide + H2O. The enzyme catalyses cumene hydroperoxide + 2 glutathione = 2-phenylpropan-2-ol + glutathione disulfide + H2O. With respect to regulation, the channel conductance is regulated by pH. Functionally, in the soluble state, catalyzes glutaredoxin-like thiol disulfide exchange reactions with reduced glutathione as electron donor. Displays weak glutathione peroxidase activity. Can insert into membranes and form chloride ion channels. Membrane insertion seems to be redox-regulated and may occur only under oxidizing conditions. Modulates the activity of RYR2 and inhibits calcium influx. This chain is Chloride intracellular channel protein 2, found in Homo sapiens (Human).